The chain runs to 1744 residues: DNA-directed RNA polymerase I subunit RPA1 (1744 aa).

Positions 56, 69, and 72 each coordinate Zn(2+). Mg(2+)-binding residues include aspartate 597, aspartate 599, and aspartate 601. The segment at 953 to 965 is bridging helix; it reads PAEYTIHAMAGRD. A disordered region spans residues 1333 to 1484; the sequence is VPREKESGDG…RDGTDWGGTS (152 aa). 2 stretches are compositionally biased toward gly residues: residues 1341-1354 and 1366-1376; these read DGSG…GGSG and DDGGGPLGGTF. Basic and acidic residues predominate over residues 1464–1478; it reads RDAEDGGEMQDRDGT.

Belongs to the RNA polymerase beta' chain family. In terms of assembly, component of the RNA polymerase I (Pol I) complex consisting of at least 13 subunits. Phosphorylated.

It is found in the nucleus. The protein resides in the nucleolus. The catalysed reaction is RNA(n) + a ribonucleoside 5'-triphosphate = RNA(n+1) + diphosphate. In terms of biological role, DNA-dependent RNA polymerase catalyzes the transcription of DNA into RNA using the four ribonucleoside triphosphates as substrates. Largest and catalytic core component of RNA polymerase I which synthesizes ribosomal RNA precursors. Forms the polymerase active center together with the second largest subunit. A single stranded DNA template strand of the promoter is positioned within the central active site cleft of Pol I. A bridging helix emanates from RPA1 and crosses the cleft near the catalytic site and is thought to promote translocation of Pol I by acting as a ratchet that moves the RNA-DNA hybrid through the active site by switching from straight to bent conformations at each step of nucleotide addition. The polypeptide is DNA-directed RNA polymerase I subunit RPA1 (TRP11) (Trypanosoma brucei brucei).